The following is a 395-amino-acid chain: MKRVLIMMLDSFGIGGAEDADKFGDKGANTLGHIASHQPSLNLPHLESLGLGLAAKESCGELPKHFQNQPHLIGGYAFAREISSGKDTTSGHWEIAGVPVLFDWGLFPDKQNSFPKPLLDRIVAKAGIKGYLGNCHSSGTVILDQLGEEHMKTGLPIFYTSADSVFQIAAHEETFGLNNLYELCEIVRTELEGYNIGRVIARPFIGNKAGAFKRTGNRRDYSVEPPAKTVLQKFIEEKEGMVVSVGKIADIYAHTGISKKVKATGLEELFDKTLEEVKSAGDNTIVFTNFVNFDADFGHRRDVTGYAKGLEYFDRRLPELLRLMKDDDLLIITADHGCDPTWQGSDHTREHIPVLMYGAQVPARFLGARETFADIGQTVAKYLGVSPMEYGTAII.

Residues aspartate 10, aspartate 294, histidine 299, aspartate 335, histidine 336, and histidine 347 each coordinate Mn(2+).

This sequence belongs to the phosphopentomutase family. Requires Mn(2+) as cofactor.

Its subcellular location is the cytoplasm. The catalysed reaction is 2-deoxy-alpha-D-ribose 1-phosphate = 2-deoxy-D-ribose 5-phosphate. The enzyme catalyses alpha-D-ribose 1-phosphate = D-ribose 5-phosphate. The protein operates within carbohydrate degradation; 2-deoxy-D-ribose 1-phosphate degradation; D-glyceraldehyde 3-phosphate and acetaldehyde from 2-deoxy-alpha-D-ribose 1-phosphate: step 1/2. Functionally, isomerase that catalyzes the conversion of deoxy-ribose 1-phosphate (dRib-1-P) and ribose 1-phosphate (Rib-1-P) to deoxy-ribose 5-phosphate (dRib-5-P) and ribose 5-phosphate (Rib-5-P), respectively. The sequence is that of Phosphopentomutase from Actinobacillus succinogenes (strain ATCC 55618 / DSM 22257 / CCUG 43843 / 130Z).